The chain runs to 563 residues: Sulfite reductase [NADPH] hemoprotein beta-component (563 aa).

4 residues coordinate [4Fe-4S] cluster: Cys-426, Cys-432, Cys-472, and Cys-476. Cys-476 contacts siroheme.

The protein belongs to the nitrite and sulfite reductase 4Fe-4S domain family. In terms of assembly, alpha(8)-beta(8). The alpha component is a flavoprotein, the beta component is a hemoprotein. Requires siroheme as cofactor. It depends on [4Fe-4S] cluster as a cofactor.

It carries out the reaction hydrogen sulfide + 3 NADP(+) + 3 H2O = sulfite + 3 NADPH + 4 H(+). The protein operates within sulfur metabolism; hydrogen sulfide biosynthesis; hydrogen sulfide from sulfite (NADPH route): step 1/1. In terms of biological role, component of the sulfite reductase complex that catalyzes the 6-electron reduction of sulfite to sulfide. This is one of several activities required for the biosynthesis of L-cysteine from sulfate. The polypeptide is Sulfite reductase [NADPH] hemoprotein beta-component (Photobacterium profundum (strain SS9)).